Here is a 236-residue protein sequence, read N- to C-terminus: Venom metalloproteinase antarease-like TfasMP_A (236 aa).

One can recognise a Peptidase M12B domain in the interval 4-232 (IVVEYYIVTD…KPAASCIFEQ (229 aa)). Histidine 161 is a Zn(2+) binding site. Glutamate 162 is an active-site residue. 2 residues coordinate Zn(2+): histidine 165 and histidine 171.

Belongs to the venom metalloproteinase (M12B) family. It depends on Zn(2+) as a cofactor. In terms of processing, contains several disulfide bonds. Expressed by the venom gland.

The protein localises to the secreted. Its activity is regulated as follows. Inhibited by EDTA. In terms of biological role, acts as a metalloprotease. Penetrates intact tissue and specifically cleaves the vesicle-associated membrane protein 2 (VAMP2) (part of the SNARE complex) involved in pancreatic secretion, thus disrupting the normal vesicular traffic. The sequence is that of Venom metalloproteinase antarease-like TfasMP_A from Tityus fasciolatus (Central Brazilian scorpion).